Here is a 346-residue protein sequence, read N- to C-terminus: MKTLTIRQPDDWHLHLRDGSVLQAVAEHSAAHFARAIIMPNLVPPVVTTRDAAAYRERILAALSEGSAFTPLMTLYLTESSCADDIEAGFRSGLIKAVKLYPAGATTNSQSGVRNIEAVYPVLERMAKIGLPLCVHGEVTDPAVDIFDREAVFIERVLQPLRRRLPELRIVMEHVTTKDGVDFALSQDENVGATITTHHLIINRNAILAGGIRPHYYCLPVAKRESHRLALRAAAISGEGRFFLGTDSAPHLDPLKECACGCAGVFNAPNTMACLAHVFEEEGALDRLEAFTSLNGPAFYRLPPNEKRITLRRYDEPLEMERKVSVGDEAITVFDPMFPIHWKVED.

Residues His13 and His15 each coordinate Zn(2+). Substrate contacts are provided by residues 15 to 17 (HLR) and Asn41. Residues Lys99, His136, and His174 each coordinate Zn(2+). Lys99 carries the N6-carboxylysine modification. His136 contributes to the substrate binding site. A substrate-binding site is contributed by Leu219. A Zn(2+)-binding site is contributed by Asp247. The active site involves Asp247. 2 residues coordinate substrate: His251 and Ala263.

Belongs to the metallo-dependent hydrolases superfamily. DHOase family. Class II DHOase subfamily. In terms of assembly, homodimer. The cofactor is Zn(2+).

The catalysed reaction is (S)-dihydroorotate + H2O = N-carbamoyl-L-aspartate + H(+). It functions in the pathway pyrimidine metabolism; UMP biosynthesis via de novo pathway; (S)-dihydroorotate from bicarbonate: step 3/3. Catalyzes the reversible cyclization of carbamoyl aspartate to dihydroorotate. This Chelativorans sp. (strain BNC1) protein is Dihydroorotase.